The primary structure comprises 306 residues: Ribosomal protein L11 methyltransferase (306 aa).

Residues threonine 152, glycine 179, aspartate 201, and asparagine 243 each coordinate S-adenosyl-L-methionine.

It belongs to the methyltransferase superfamily. PrmA family.

It localises to the cytoplasm. The catalysed reaction is L-lysyl-[protein] + 3 S-adenosyl-L-methionine = N(6),N(6),N(6)-trimethyl-L-lysyl-[protein] + 3 S-adenosyl-L-homocysteine + 3 H(+). Its function is as follows. Methylates ribosomal protein L11. The polypeptide is Ribosomal protein L11 methyltransferase (Citrifermentans bemidjiense (strain ATCC BAA-1014 / DSM 16622 / JCM 12645 / Bem) (Geobacter bemidjiensis)).